Reading from the N-terminus, the 307-residue chain is Dimethyladenosine transferase (307 aa).

S-adenosyl-L-methionine-binding residues include His31, Leu33, Gly58, Glu79, Asp107, and Asn122.

This sequence belongs to the class I-like SAM-binding methyltransferase superfamily. rRNA adenine N(6)-methyltransferase family.

The catalysed reaction is adenosine(1779)/adenosine(1780) in 18S rRNA + 4 S-adenosyl-L-methionine = N(6)-dimethyladenosine(1779)/N(6)-dimethyladenosine(1780) in 18S rRNA + 4 S-adenosyl-L-homocysteine + 4 H(+). Its function is as follows. Specifically dimethylates two adjacent adenosines in the loop of a conserved hairpin near the 3'-end of 18S rRNA in the 40S particle. The protein is Dimethyladenosine transferase (dim1) of Schizosaccharomyces pombe (strain 972 / ATCC 24843) (Fission yeast).